We begin with the raw amino-acid sequence, 59 residues long: Antitoxin RelB4 (59 aa).

The segment at 38–59 is disordered; the sequence is VGEWLKTLGTPHQTPPPYSWRK. Residues 50–59 show a composition bias toward pro residues; the sequence is QTPPPYSWRK.

Its function is as follows. Antitoxin component of a type II toxin-antitoxin (TA) system. Neutralizes the effect of cognate toxin RelE4, but no other RelE or ParE toxin. The sequence is that of Antitoxin RelB4 (relB4) from Caulobacter vibrioides (strain ATCC 19089 / CIP 103742 / CB 15) (Caulobacter crescentus).